The sequence spans 310 residues: Thioredoxin reductase (310 aa).

Residue asparagine 34–glutamine 41 coordinates FAD. Residues cysteine 135 and cysteine 138 are joined by a disulfide bond. Aspartate 281–alanine 290 lines the FAD pocket.

Belongs to the class-II pyridine nucleotide-disulfide oxidoreductase family. In terms of assembly, homodimer. It depends on FAD as a cofactor.

It localises to the cytoplasm. It catalyses the reaction [thioredoxin]-dithiol + NADP(+) = [thioredoxin]-disulfide + NADPH + H(+). In Rickettsia typhi (strain ATCC VR-144 / Wilmington), this protein is Thioredoxin reductase (trxB).